The sequence spans 238 residues: Gem-associated protein 8 (238 aa).

The segment at 66–127 is disordered; that stretch reads AGHPWDSQGQ…LESDSDDEVE (62 aa). 2 stretches are compositionally biased toward polar residues: residues 72 to 82 and 96 to 108; these read SQGQHMAQQES and LRNS…STRG. Positions 113-127 are enriched in acidic residues; it reads CEEEELESDSDDEVE. Position 122 is a phosphoserine (S122). Positions 131–164 form a coiled coil; it reads SNMEITEELRQYFAQTERHREERRRQQQLDAERL.

As to quaternary structure, part of the core SMN complex that contains SMN1, GEMIN2/SIP1, DDX20/GEMIN3, GEMIN4, GEMIN5, GEMIN6, GEMIN7, GEMIN8 and STRAP/UNRIP. Part of the SMN-Sm complex that contains SMN1, GEMIN2/SIP1, DDX20/GEMIN3, GEMIN4, GEMIN5, GEMIN6, GEMIN7, GEMIN8, STRAP/UNRIP and the Sm proteins SNRPB, SNRPD1, SNRPD2, SNRPD3, SNRPE, SNRPF and SNRPG. Interacts with GEMIN6; the interaction is direct. Interacts with GEMIN7; the interaction is direct. Interacts with SMN1; the interaction is direct. Interacts with GEMIN4; the interaction is direct. Widely expressed in embryonic tissues (at protein level).

It localises to the nucleus. It is found in the gem. Its subcellular location is the cytoplasm. The SMN complex catalyzes the assembly of small nuclear ribonucleoproteins (snRNPs), the building blocks of the spliceosome, and thereby plays an important role in the splicing of cellular pre-mRNAs. Most spliceosomal snRNPs contain a common set of Sm proteins SNRPB, SNRPD1, SNRPD2, SNRPD3, SNRPE, SNRPF and SNRPG that assemble in a heptameric protein ring on the Sm site of the small nuclear RNA to form the core snRNP (Sm core). In the cytosol, the Sm proteins SNRPD1, SNRPD2, SNRPE, SNRPF and SNRPG are trapped in an inactive 6S pICln-Sm complex by the chaperone CLNS1A that controls the assembly of the core snRNP. To assemble core snRNPs, the SMN complex accepts the trapped 5Sm proteins from CLNS1A forming an intermediate. Binding of snRNA inside 5Sm triggers eviction of the SMN complex, thereby allowing binding of SNRPD3 and SNRPB to complete assembly of the core snRNP. This chain is Gem-associated protein 8 (Gemin8), found in Mus musculus (Mouse).